Reading from the N-terminus, the 368-residue chain is tRNA N6-adenosine threonylcarbamoyltransferase (368 aa).

The Fe cation site is built by H108 and H112. Residues 149–153 (LVSGG), D183, G196, D200, and N301 contribute to the substrate site. D329 serves as a coordination point for Fe cation.

Belongs to the KAE1 / TsaD family. Fe(2+) is required as a cofactor.

It is found in the cytoplasm. The enzyme catalyses L-threonylcarbamoyladenylate + adenosine(37) in tRNA = N(6)-L-threonylcarbamoyladenosine(37) in tRNA + AMP + H(+). Its function is as follows. Required for the formation of a threonylcarbamoyl group on adenosine at position 37 (t(6)A37) in tRNAs that read codons beginning with adenine. Is involved in the transfer of the threonylcarbamoyl moiety of threonylcarbamoyl-AMP (TC-AMP) to the N6 group of A37, together with TsaE and TsaB. TsaD likely plays a direct catalytic role in this reaction. The chain is tRNA N6-adenosine threonylcarbamoyltransferase from Paenarthrobacter aurescens (strain TC1).